We begin with the raw amino-acid sequence, 120 residues long: Large ribosomal subunit protein bL12 (120 aa).

It belongs to the bacterial ribosomal protein bL12 family. As to quaternary structure, homodimer. Part of the ribosomal stalk of the 50S ribosomal subunit. Forms a multimeric L10(L12)X complex, where L10 forms an elongated spine to which 2 to 4 L12 dimers bind in a sequential fashion. Binds GTP-bound translation factors.

Its function is as follows. Forms part of the ribosomal stalk which helps the ribosome interact with GTP-bound translation factors. Is thus essential for accurate translation. This Listeria welshimeri serovar 6b (strain ATCC 35897 / DSM 20650 / CCUG 15529 / CIP 8149 / NCTC 11857 / SLCC 5334 / V8) protein is Large ribosomal subunit protein bL12.